The chain runs to 713 residues: Early transcription factor 82 kDa subunit (713 aa).

Belongs to the poxviridae VETF large subunit family. As to quaternary structure, heterodimer of a 70 kDa and a 82 kDa subunit. Part of the early transcription complex composed of ETF, RAP94, and the DNA-directed RNA polymerase.

Functionally, acts with RNA polymerase to initiate transcription from early gene promoters. Is recruited by the RPO-associated protein of 94 kDa (RAP94) to form the early transcription complex, which also contains the core RNA polymerase. ETF heterodimer binds to early gene promoters. This chain is Early transcription factor 82 kDa subunit (VETFL), found in Yaba monkey tumor virus (strain VR587) (YMTV).